A 270-amino-acid polypeptide reads, in one-letter code: MPELPEVETTRRGVEPHLEGRTLLGAVVRNPSLRWPVPPDLSERVAGEKVLAVRRRAKYLLLECESGTLLIHLGMSGSLRVMPAGAPPQKHDHLDLLLGEQVLRFRDPRRFGAVLWHLGPVEMHPLLQALGPEPLSDAFDGAALHQAIRRRGSPIKLAIMDNHVVVGVGNIYANESLFHAGISPARAACDLSRADCDRLAAEIKAVLRRAIDAGGSTLRDFVDSEGKPGYFQQTYMVYNRQEEPCRLCGTPIRQIRQGQRSTYYCPLCQP.

Proline 2 acts as the Schiff-base intermediate with DNA in catalysis. The active-site Proton donor is the glutamate 3. Lysine 58 serves as the catalytic Proton donor; for beta-elimination activity. DNA is bound by residues histidine 91, arginine 109, and arginine 151. The FPG-type zinc finger occupies 236–270; it reads MVYNRQEEPCRLCGTPIRQIRQGQRSTYYCPLCQP. Arginine 260 acts as the Proton donor; for delta-elimination activity in catalysis.

This sequence belongs to the FPG family. As to quaternary structure, monomer. The cofactor is Zn(2+).

The catalysed reaction is Hydrolysis of DNA containing ring-opened 7-methylguanine residues, releasing 2,6-diamino-4-hydroxy-5-(N-methyl)formamidopyrimidine.. It catalyses the reaction 2'-deoxyribonucleotide-(2'-deoxyribose 5'-phosphate)-2'-deoxyribonucleotide-DNA = a 3'-end 2'-deoxyribonucleotide-(2,3-dehydro-2,3-deoxyribose 5'-phosphate)-DNA + a 5'-end 5'-phospho-2'-deoxyribonucleoside-DNA + H(+). Its function is as follows. Involved in base excision repair of DNA damaged by oxidation or by mutagenic agents. Acts as a DNA glycosylase that recognizes and removes damaged bases. Has a preference for oxidized purines, such as 7,8-dihydro-8-oxoguanine (8-oxoG). Has AP (apurinic/apyrimidinic) lyase activity and introduces nicks in the DNA strand. Cleaves the DNA backbone by beta-delta elimination to generate a single-strand break at the site of the removed base with both 3'- and 5'-phosphates. This chain is Formamidopyrimidine-DNA glycosylase, found in Chromobacterium violaceum (strain ATCC 12472 / DSM 30191 / JCM 1249 / CCUG 213 / NBRC 12614 / NCIMB 9131 / NCTC 9757 / MK).